Consider the following 1150-residue polypeptide: GPI inositol-deacylase (1150 aa).

The tract at residues 1–43 (MQGRPNGASGDPNPRNDTSVTIDSDSDNGSRHRIAEVRGSSPS) is disordered. N-linked (GlcNAc...) asparagine glycans are attached at residues asparagine 16 and asparagine 28. Residues 122–142 (ICSGLVLFVTVSALLILSIIV) traverse the membrane as a helical segment. Serine 309 is a catalytic residue. The chain crosses the membrane as a helical span at residues 790 to 810 (LAMRYRTVFAAFPLLVVSLVL). A glycan (N-linked (GlcNAc...) asparagine) is linked at asparagine 818. A helical membrane pass occupies residues 829–849 (ALDLCIRSSIPLLFLGLTFLA). The N-linked (GlcNAc...) asparagine glycan is linked to asparagine 870. The chain crosses the membrane as a helical span at residues 890–910 (AFFWFLVPLFGIISIGTCVIV). The N-linked (GlcNAc...) asparagine glycan is linked to asparagine 942. Transmembrane regions (helical) follow at residues 960-980 (VLLLFVATFIPYQFAYVVACV), 1010-1030 (SIFILMIWILPINVLVLIVWI), 1047-1067 (VFSILPFMLLVETLTCGTMIP), 1079-1099 (VLFFFLAAYSAIYGVTYAYLL), and 1102-1122 (ITNLVIAWLVGIHFFAGGFSL). Asparagine 1124 and asparagine 1130 each carry an N-linked (GlcNAc...) asparagine glycan.

Belongs to the GPI inositol-deacylase family.

It is found in the endoplasmic reticulum membrane. Involved in inositol deacylation of GPI-anchored proteins which plays important roles in the quality control and ER-associated degradation of GPI-anchored proteins. This is GPI inositol-deacylase (BST1) from Coccidioides immitis (strain RS) (Valley fever fungus).